The chain runs to 449 residues: Plasmepsin IV (449 aa).

The Cytoplasmic segment spans residues 1-37 (MALTVKEEEFSNTLIKNASAFDRLKLGNLKNLKIQKK). Residues 1–121 (MALTVKEEEF…SGYAQKGYLG (121 aa)) constitute a propeptide that is removed on maturation. Residues 38–58 (LQFLYLILFVLITGVFFFFLI) form a helical; Signal-anchor for type II membrane protein membrane-spanning segment. Residues 59 to 449 (GNFYSHRKLY…SVGFAVAKNL (391 aa)) are Lumenal-facing. Residues 137 to 444 (FYGEGQIGTN…DYEKESVGFA (308 aa)) form the Peptidase A1 domain. Aspartate 155 is a catalytic residue. Cysteine 168 and cysteine 173 form a disulfide bridge. Aspartate 335 is a catalytic residue. An intrachain disulfide couples cysteine 370 to cysteine 406.

Belongs to the peptidase A1 family. Component of the hemozoin formation complex (HFC) composed of falcipains FP2A and/or FP2B, plasmepsins PMII, PMIII/HAP and PMIV, heme detoxifying protein HDP and falcilysin FLN. The HFC complex is involved in hemoglobin degradation and detoxification of heme in the food vacuole during the asexual blood stage. Post-translationally, proteolytically cleaved into the soluble active mature form by cysteine proteases in the digestive vacuole of trophozoites. Proteolysis requires an acidic environment. Autoprocessing or transprocessing by other plasmepsins such as PMII may serve as an alternate activation system.

Its subcellular location is the membrane. It localises to the vacuole lumen. It catalyses the reaction Hydrolysis of the bonds linking certain hydrophobic residues in hemoglobin or globin. Also cleaves small molecules substrates such as Ala-Leu-Glu-Arg-Thr-Phe-|-Phe(NO2)-Ser-Phe-Pro-Thr.. Its activity is regulated as follows. Inhibited by pepstatin A. Its function is as follows. During the asexual blood stage, catalyzes the cleavage of denatured host hemoglobin (Hb) or globins. Digestion of host Hb is an essential step which provides the parasite with amino acids for protein synthesis, and regulates osmolarity. The sequence is that of Plasmepsin IV from Plasmodium falciparum (isolate HB3).